We begin with the raw amino-acid sequence, 157 residues long: Type II restriction enzyme PvuII (157 aa).

Mg(2+)-binding residues include Asp-58 and Glu-68.

Homodimer. Mg(2+) is required as a cofactor.

It carries out the reaction Endonucleolytic cleavage of DNA to give specific double-stranded fragments with terminal 5'-phosphates.. Functionally, a P subtype restriction enzyme that recognizes the double-stranded sequence 5'-CAGCTG-3' and cleaves after G-3. The chain is Type II restriction enzyme PvuII (pvuIIR) from Proteus hauseri.